A 368-amino-acid polypeptide reads, in one-letter code: L-arabinitol 4-dehydrogenase (368 aa).

The Zn(2+) site is built by Cys52, His77, Glu78, Cys107, Cys110, Cys113, Cys121, and Glu162. Residues Asp210, Arg215, and Ile282 each coordinate NAD(+).

It belongs to the zinc-containing alcohol dehydrogenase family. Homotetramer. It depends on Zn(2+) as a cofactor.

It catalyses the reaction L-arabinitol + NAD(+) = L-xylulose + NADH + H(+). Its function is as follows. Plays a key role in liamocins biosynthesis by providing the arabinol moity that is linked to 3,5-dihydroxydecanoic acid (provided by the HR-PKS PKS1) via ester bond formation catalyzed by the esterase EST1. This Aureobasidium melanogenum (Aureobasidium pullulans var. melanogenum) protein is L-arabinitol 4-dehydrogenase.